A 200-amino-acid chain; its full sequence is Translation machinery-associated protein 22 (200 aa).

One can recognise an SUI1 domain in the interval 95-166 (VVIRREARTK…EVEAYIHSLL (72 aa)).

This sequence belongs to the DENR family. As to quaternary structure, interacts with the 40S ribosomal subunit.

Its subcellular location is the cytoplasm. The sequence is that of Translation machinery-associated protein 22 (TMA22) from Kluyveromyces lactis (strain ATCC 8585 / CBS 2359 / DSM 70799 / NBRC 1267 / NRRL Y-1140 / WM37) (Yeast).